The sequence spans 101 residues: Protein snet-1 (101 aa).

Positions 1–20 (MARFTPLLMILLALVPLYYS) are cleaved as a signal peptide.

In terms of processing, may be degraded by the nep-2 peptidase. As to expression, expressed in coelomocytes, the ASK sensory neurons and interneurons AIB, AIM and PVQ.

The protein resides in the secreted. It localises to the perikaryon. In terms of biological role, negatively regulates chemotaxis and olfactory plasticity which is the change from positive chemotaxis to dispersal after prolonged exposure to an odorant. May be down-regulated in response to pheromone exposure, resulting in promotion of olfactory plasticity. This is Protein snet-1 from Caenorhabditis elegans.